The primary structure comprises 320 residues: Aspartate carbamoyltransferase catalytic subunit (320 aa).

Carbamoyl phosphate contacts are provided by R53 and T54. K82 is an L-aspartate binding site. Carbamoyl phosphate-binding residues include R103, H131, and Q134. Residues R164 and R227 each contribute to the L-aspartate site. L266 and P267 together coordinate carbamoyl phosphate.

It belongs to the aspartate/ornithine carbamoyltransferase superfamily. ATCase family. Heterododecamer (2C3:3R2) of six catalytic PyrB chains organized as two trimers (C3), and six regulatory PyrI chains organized as three dimers (R2).

It carries out the reaction carbamoyl phosphate + L-aspartate = N-carbamoyl-L-aspartate + phosphate + H(+). It participates in pyrimidine metabolism; UMP biosynthesis via de novo pathway; (S)-dihydroorotate from bicarbonate: step 2/3. In terms of biological role, catalyzes the condensation of carbamoyl phosphate and aspartate to form carbamoyl aspartate and inorganic phosphate, the committed step in the de novo pyrimidine nucleotide biosynthesis pathway. The protein is Aspartate carbamoyltransferase catalytic subunit of Bifidobacterium longum (strain NCC 2705).